The chain runs to 410 residues: Lissencephaly-1 homolog (410 aa).

In terms of domain architecture, LisH spans 7–39 (QRDELNRAIADYLRSNGYEEAYSTFKKEAELDN). A coiled-coil region spans residues 32-82 (KKEAELDNNEELDKKYAGLLEKKWTSVIRLQKKVMELESKLNEAKEEITLG). WD repeat units lie at residues 106 to 147 (GHRS…RTLK), 148 to 189 (GHTD…RTMH), 190 to 229 (GHDHNVSSVAIMPNGDHIISASRDKTMKMWEVATGYCVKT), 232 to 271 (GHREWVRMVRPNQDGTLIASCSNDQTVRVWVVASKECKAE), 274 to 333 (EHEH…CLMT), 336 to 375 (GHDNWVRGVLFHPGGKFIVTCADDKTLRIWDYKNKRCMKT), and 378 to 410 (AHEHFVTSLDFHKAAPYVVTGSVDQTVKVWECR).

The protein belongs to the WD repeat LIS1/nudF family. In terms of assembly, can self-associate. Component of the cytosolic PAF-AH (I) heterotetrameric enzyme, which is composed of PAFAH1B1 (beta), PAFAH1B2 (alpha2) and PAFAH1B3 (alpha1) subunits. The catalytic activity of the enzyme resides in the alpha1 (PAFAH1B3) and alpha2 (PAFAH1B2) subunits, whereas the beta subunit (PAFAH1B1) has regulatory activity. Trimer formation is not essential for the catalytic activity. Interacts with dynein, dynactin, nde1 and ndel1.

The protein resides in the cytoplasm. Its subcellular location is the cytoskeleton. It localises to the microtubule organizing center. The protein localises to the centrosome. Its function is as follows. Regulatory subunit (beta subunit) of the cytosolic type I platelet-activating factor (PAF) acetylhydrolase (PAF-AH (I)), an enzyme that catalyzes the hydrolyze of the acetyl group at the sn-2 position of PAF and its analogs and participates in the PAF inactivation. Positively regulates the activity of the minus-end directed microtubule motor protein dynein. May enhance dynein-mediated microtubule sliding by targeting dynein to the microtubule plus end. Required for several dynein- and microtubule-dependent processes such as the maintenance of Golgi integrity, the peripheral transport of microtubule fragments and the coupling of the nucleus and centrosome. May be required for proliferation of neuronal precursors and neuronal migration. This Tetraodon nigroviridis (Spotted green pufferfish) protein is Lissencephaly-1 homolog (pafah1b1).